The chain runs to 124 residues: Fluoride-specific ion channel FluC (124 aa).

4 helical membrane-spanning segments follow: residues 3 to 23 (IIAI…LSIW), 34 to 54 (YGTL…LVLA), 66 to 86 (LLIV…SFET), and 100 to 120 (LYVL…AGVA). Na(+) is bound by residues Gly74 and Thr77.

This sequence belongs to the fluoride channel Fluc/FEX (TC 1.A.43) family.

It is found in the cell membrane. The enzyme catalyses fluoride(in) = fluoride(out). With respect to regulation, na(+) is not transported, but it plays an essential structural role and its presence is essential for fluoride channel function. Functionally, fluoride-specific ion channel. Important for reducing fluoride concentration in the cell, thus reducing its toxicity. This is Fluoride-specific ion channel FluC from Roseiflexus sp. (strain RS-1).